The primary structure comprises 722 residues: Cellulose synthase-like protein G2 (722 aa).

Transmembrane regions (helical) follow at residues 25 to 45 (IYAV…VHSI) and 51 to 71 (TLIT…WATT). Active-site residues include Asp-139 and Asp-437. 6 consecutive transmembrane segments (helical) span residues 514–534 (FWPF…VALI), 548–568 (FWLY…DFLL), 583–605 (WMVR…TLNL), 635–655 (PSSS…LAFM), 660–680 (GIFT…FAVV), and 702–722 (ICFL…FFLK).

It belongs to the glycosyltransferase 2 family. Plant cellulose synthase-like G subfamily. In terms of tissue distribution, expressed in young seedlings, primarily in the vascular tissue.

It localises to the golgi apparatus membrane. Thought to be a Golgi-localized beta-glycan synthase that polymerize the backbones of noncellulosic polysaccharides (hemicelluloses) of plant cell wall. This Arabidopsis thaliana (Mouse-ear cress) protein is Cellulose synthase-like protein G2 (CSLG2).